The chain runs to 154 residues: Iron-sulfur cluster assembly 2 homolog, mitochondrial (154 aa).

The N-terminal 8 residues, 1-8 (MAAARGLS), are a transit peptide targeting the mitochondrion. The Fe cation site is built by C79, C144, and C146.

Belongs to the HesB/IscA family. As to quaternary structure, heterotetramer; forms a dimer of dimers with IBA57. Interacts with [2Fe-2S]-ISCA2 forming the heterodimer [2Fe- 2S]-ISCA2-IBA57 complex; [2Fe-2S] cluster binding is absolutely required to promote the complex formation.

It localises to the mitochondrion. Functionally, involved in the maturation of mitochondrial 4Fe-4S proteins functioning late in the iron-sulfur cluster assembly pathway. May be involved in the binding of an intermediate of Fe/S cluster assembly. The sequence is that of Iron-sulfur cluster assembly 2 homolog, mitochondrial (ISCA2) from Pongo abelii (Sumatran orangutan).